Reading from the N-terminus, the 122-residue chain is Probable F-box protein At4g23960 (122 aa).

The 45-residue stretch at 1-45 folds into the F-box domain; the sequence is MIEQLFPEVTCYALRYLDYSSLCQLSMTSSSMRKTANDDVLWRAL.

The chain is Probable F-box protein At4g23960 from Arabidopsis thaliana (Mouse-ear cress).